Consider the following 845-residue polypeptide: MVGVKTQGEDILEYGRGYSEDVDIIREREYPQLKDTTYLDHAGTTLYAKSLIEAFSRDLTSNLFGNPHSMSASSQLSTRRVDDVRLRALRFFKADPDDFDLVFVANATAAIKLVADAMRDSRQGFWYGYHVDAHTSLVGARELAAKGNRCFSSDEEVEGWIQSLREAGPESLNLFAYPAQSNLNGRRLPLSWCETIRRRSEAAGGNTYTLLDAASLVSTSPLDLSDAAAAPDFTVLSFYKIFGFPDLGALIVRKSAGHIFEQRRFFGGGTVDMVLTREMQWHAKKQSSIHDRLEDGTLPFHSIIALDSAFATHRRLFGSMENVSSHTRFLAKRLYDKLAALKHSNGERVCQLYTNPFSDYNKAASQGPIIAFNLRNSHGAWIGKSEVERLATVKNIQFRSGSLCNPGGTSGSLGWTGADLLQQFSAGLRCGDDHDVMDGRPTGVLRLSLGAMTNLADINTVIQFVEEFYVERAAAVESLITPVPSIPVQQPRFYIESLSVYPIKSCGAFRVPDGKRWEIRREGLAWDREWCLVHQGTGATLNQKKYPRMALIRPFVDLDRNVLRITCGELTSSDQQVLEVSLDREDTNLVSTSICQRSSKSSTVCGDQVVVQAYSSPSVSRFFSEFLGVPCTLARFPPQSSSRFSPPKRPSGAWKQYLRKFVMPGSFPQDSSPSSAPERNPILLSNESPILLISRSSVNYLNENIKANQKKKKRAEGSSSSRAVAADVFRANIVVAESFTQLPRVESPYVEDHWESLKIGPEHLQLDVLGACQRCSMVCIDQFTGVRRDEPFSTLAKTRKINGKIVFGRHASLASSEVTRDEHDTTERWTLMVGDTVTPSYTHEE.

N6-(pyridoxal phosphate)lysine is present on Lys-240. Cys-404 is an active-site residue. The region spanning 666–840 (SFPQDSSPSS…LMVGDTVTPS (175 aa)) is the MOSC domain.

This sequence belongs to the class-V pyridoxal-phosphate-dependent aminotransferase family. MOCOS subfamily. Pyridoxal 5'-phosphate is required as a cofactor.

The catalysed reaction is Mo-molybdopterin + L-cysteine + AH2 = thio-Mo-molybdopterin + L-alanine + A + H2O. The protein operates within cofactor biosynthesis; molybdopterin biosynthesis. Functionally, sulfurates the molybdenum cofactor. Sulfation of molybdenum is essential for xanthine dehydrogenase (XDH) and aldehyde oxidase (ADO) enzymes in which molybdenum cofactor is liganded by 1 oxygen and 1 sulfur atom in active form. The sequence is that of Molybdenum cofactor sulfurase from Aspergillus clavatus (strain ATCC 1007 / CBS 513.65 / DSM 816 / NCTC 3887 / NRRL 1 / QM 1276 / 107).